A 295-amino-acid polypeptide reads, in one-letter code: MEIRRRPPNPTVRVENLEYAVPHREAQAKNILEEIVWHKDIEIKNFKKIVSLEDLIKKIENLPAPKDFYKNILESKIKPGVIAEIKKASPSKGVIRKDFNPKDIAICYEGLGASCISVLTDKRFFQGSYEILETVRKSTNLPLLCKDFIISAYQIYKARVSGADAILLIAAILSDDDLIYLKKIADNLKMSVLVEVHNDNELERILKLKSFNLIGINNRDLKTFKTDLKTSIELMNVYADIFSKQNILPISESGINCAKDLESLRSIGIKGVLIGETFMRESDIEESFNKLFYSI.

This sequence belongs to the TrpC family.

It carries out the reaction 1-(2-carboxyphenylamino)-1-deoxy-D-ribulose 5-phosphate + H(+) = (1S,2R)-1-C-(indol-3-yl)glycerol 3-phosphate + CO2 + H2O. Its pathway is amino-acid biosynthesis; L-tryptophan biosynthesis; L-tryptophan from chorismate: step 4/5. The protein is Indole-3-glycerol phosphate synthase of Prochlorococcus marinus (strain MIT 9215).